Here is a 186-residue protein sequence, read N- to C-terminus: CRS2-like protein, chloroplastic (186 aa).

A chloroplast-targeting transit peptide spans 1–49 (MAMTAASVFGSGGCLELLTSSKAMRGKLWTRLAPFISKRHASTSQTSLS). Y73 is a tRNA binding site. H78 acts as the Proton acceptor in catalysis. TRNA is bound by residues Y123, N125, and N171.

The protein belongs to the PTH family.

The protein resides in the plastid. The protein localises to the chloroplast. The polypeptide is CRS2-like protein, chloroplastic (Oryza sativa subsp. japonica (Rice)).